A 181-amino-acid polypeptide reads, in one-letter code: Cyclic phosphodiesterase (181 aa).

His42 (proton donor/acceptor) is an active-site residue. Thr44 contacts substrate. Cystine bridges form between Cys64-Cys177 and Cys104-Cys110. His119 functions as the Proton donor/acceptor in the catalytic mechanism. Positions 121 and 124 each coordinate substrate.

This sequence belongs to the 2H phosphoesterase superfamily. CPD1 family. In terms of tissue distribution, expressed in leaves, stems, roots, floral buds and germinating seeds.

It localises to the cytoplasm. It catalyses the reaction ADP-alpha-D-ribose 1'',2''-cyclic phosphate + H2O = ADP-alpha-D-ribose 1''-phosphate + H(+). The catalysed reaction is 2',3'-cyclophospho-AMP + H2O = adenosine 2'-phosphate + H(+). It carries out the reaction 2',3'-cyclophospho-GMP + H2O = guanosine 2'-phosphate + H(+). The enzyme catalyses 2',3'-cyclophospho-UMP + H2O = uridine 2'-phosphate + H(+). It catalyses the reaction 2',3'-cyclophospho-CMP + H2O = cytidine 2'-phosphate + H(+). With respect to regulation, inhibited by Cu(2+) and Zn(2+) at 0.5 mM by 93 and 87% respectively. Not inhibited by Ca(2+), Mg(2+), Co(2+), Ni(2+), and EDTA at 0.5 mM. Its function is as follows. Hydrolyzes ADP-ribose 1'',2''-cyclic phosphate (Appr&gt;1) that is produced during tRNA splicing into ADP-ribose 1''-phosphate (Appr-1''p). Also acts on nucleoside 2',3'-cyclic phosphates. In Arabidopsis thaliana (Mouse-ear cress), this protein is Cyclic phosphodiesterase.